Consider the following 363-residue polypeptide: Heme A synthase (363 aa).

8 consecutive transmembrane segments (helical) span residues 21–41, 107–127, 138–158, 174–194, 207–227, 268–288, 301–321, and 323–343; these read ALVRGWLYVVLLVLFALVLVG, RLLARSVGLVFALPLLFFWVS, LVGILLLGGLQGAIGWWMVAS, HLTLAALIFTATMVVARGLAP, LAGFIVLLALIQIYLGGLVAG, FVHRLGAYTVFAVALWHMIAT, ATLLFVLVLVQASIGIGTLLM, and VPLHMALTHQGFALIVLGFAA. His-270 contacts heme. His-331 contacts heme.

Belongs to the COX15/CtaA family. Type 2 subfamily. As to quaternary structure, interacts with CtaB. The cofactor is heme b.

The protein resides in the cell membrane. The enzyme catalyses Fe(II)-heme o + 2 A + H2O = Fe(II)-heme a + 2 AH2. It functions in the pathway porphyrin-containing compound metabolism; heme A biosynthesis; heme A from heme O: step 1/1. Its function is as follows. Catalyzes the conversion of heme O to heme A by two successive hydroxylations of the methyl group at C8. The first hydroxylation forms heme I, the second hydroxylation results in an unstable dihydroxymethyl group, which spontaneously dehydrates, resulting in the formyl group of heme A. The polypeptide is Heme A synthase (Mesorhizobium japonicum (strain LMG 29417 / CECT 9101 / MAFF 303099) (Mesorhizobium loti (strain MAFF 303099))).